The following is a 192-amino-acid chain: dTTP/UTP pyrophosphatase (192 aa).

Aspartate 75 serves as the catalytic Proton acceptor.

It belongs to the Maf family. YhdE subfamily. The cofactor is a divalent metal cation.

The protein resides in the cytoplasm. The enzyme catalyses dTTP + H2O = dTMP + diphosphate + H(+). It catalyses the reaction UTP + H2O = UMP + diphosphate + H(+). Its function is as follows. Nucleoside triphosphate pyrophosphatase that hydrolyzes dTTP and UTP. May have a dual role in cell division arrest and in preventing the incorporation of modified nucleotides into cellular nucleic acids. The polypeptide is dTTP/UTP pyrophosphatase (Pelodictyon phaeoclathratiforme (strain DSM 5477 / BU-1)).